The chain runs to 194 residues: Thymidylate kinase (194 aa).

7 to 14 is a binding site for ATP; that stretch reads GVDGVGKS.

Belongs to the thymidylate kinase family.

The catalysed reaction is dTMP + ATP = dTDP + ADP. In terms of biological role, phosphorylation of dTMP to form dTDP in both de novo and salvage pathways of dTTP synthesis. This chain is Thymidylate kinase, found in Campylobacter curvus (strain 525.92).